A 356-amino-acid chain; its full sequence is Viral cathepsin (356 aa).

Residues 1–40 (MYANALVCLNPSFIKLQFHIVCTMNIIGIVTLALCSAASA) form the signal peptide. The propeptide at 41 to 144 (ADEGAAYNLQ…IILNQPPDKG (104 aa)) is activation peptide. Intrachain disulfides connect Cys165–Cys206, Cys199–Cys239, and Cys295–Cys343. Cys168 is a catalytic residue. Active-site residues include His302 and Asn322.

This sequence belongs to the peptidase C1 family. Synthesized as an inactive proenzyme and activated by proteolytic removal of the inhibitory propeptide.

The catalysed reaction is Endopeptidase of broad specificity, hydrolyzing substrates of both cathepsin L and cathepsin B.. In terms of biological role, cysteine protease that plays an essential role in host liquefaction to facilitate horizontal transmission of the virus. May participate in the degradation of foreign protein expressed by the baculovirus system. The protein is Viral cathepsin (VCATH) of Lepidoptera (butterflies and moths).